The following is a 113-amino-acid chain: Non-specific lipid-transfer protein 6 (113 aa).

A signal peptide spans methionine 1 to alanine 19. Intrachain disulfides connect cysteine 23-cysteine 70, cysteine 33-cysteine 47, cysteine 48-cysteine 95, and cysteine 68-cysteine 109.

Belongs to the plant LTP family.

Functionally, plant non-specific lipid-transfer proteins transfer phospholipids as well as galactolipids across membranes. May play a role in wax or cutin deposition in the cell walls of expanding epidermal cells and certain secretory tissues. The sequence is that of Non-specific lipid-transfer protein 6 (LTP6) from Arabidopsis thaliana (Mouse-ear cress).